A 493-amino-acid chain; its full sequence is Cytochrome P450 2A9 (493 aa).

C438 lines the heme pocket.

The protein belongs to the cytochrome P450 family. It depends on heme as a cofactor. In terms of tissue distribution, liver.

It is found in the endoplasmic reticulum membrane. The protein resides in the microsome membrane. The enzyme catalyses an organic molecule + reduced [NADPH--hemoprotein reductase] + O2 = an alcohol + oxidized [NADPH--hemoprotein reductase] + H2O + H(+). In terms of biological role, cytochromes P450 are a group of heme-thiolate monooxygenases. In liver microsomes, this enzyme is involved in an NADPH-dependent electron transport pathway. It oxidizes a variety of structurally unrelated compounds, including steroids, fatty acids, and xenobiotics. The polypeptide is Cytochrome P450 2A9 (CYP2A9) (Mesocricetus auratus (Golden hamster)).